The following is a 2184-amino-acid chain: Genome polyprotein (2184 aa).

Gly-2 carries N-myristoyl glycine; by host lipidation. The Cytoplasmic portion of the chain corresponds to 2–1494; the sequence is GAQVSTQKTG…HVSRAFICLQ (1493 aa). Residues 566–582 are amphipathic alpha-helix; it reads FYQSPVEGAIERAIARV. Catalysis depends on for protease 2A activity residues His-871 and Asp-889. Residues Cys-906 and Cys-908 each contribute to the Zn(2+) site. The For protease 2A activity role is filled by Cys-960. Cys-966 and His-968 together coordinate Zn(2+). Positions 1100 to 1172 are membrane-binding; that stretch reads SNGWLKKFTE…EQSAPSQSDQ (73 aa). Residues 1100-1238 form an oligomerization region; it reads SNGWLKKFTE…SPGAGKSVAT (139 aa). The tract at residues 1121-1125 is RNA-binding; the sequence is AIKIQ. The 157-residue stretch at 1204–1360 folds into the SF3 helicase domain; it reads EKKMSNYIQF…SMYSQNGKIN (157 aa). 3 residues coordinate Zn(2+): Cys-1368, Cys-1380, and Cys-1385. A C4-type; degenerate zinc finger spans residues 1368–1385; that stretch reads CDEECCPVNFKKCCPLVC. The RNA-binding stretch occupies residues 1412-1419; that stretch reads EYNHRHSV. Residues 1423-1428 form an oligomerization region; it reads LEALFQ. The stretch at 1495–1510 is an intramembrane region; the sequence is ALTTFVSVAGIIYIIY. Residues 1511–2184 lie on the Cytoplasmic side of the membrane; that stretch reads KLFAGFQGAY…TLRRKWLDSF (674 aa). An O-(5'-phospho-RNA)-tyrosine modification is found at Tyr-1520. In terms of domain architecture, Peptidase C3 spans 1540–1718; it reads GPAFEFAVAM…FSAALLKHYF (179 aa). Catalysis depends on for protease 3C activity residues His-1579, Glu-1610, and Cys-1686. Residues 1949–2065 form the RdRp catalytic domain; the sequence is GHLIAFDYSG…SYPWPIDASL (117 aa). 2 residues coordinate Mg(2+): Asp-1955 and Asp-2051.

The protein belongs to the picornaviruses polyprotein family. In terms of assembly, interacts with capsid protein VP1 and capsid protein VP3 to form heterotrimeric protomers. Interacts with capsid protein VP0, and capsid protein VP3 to form heterotrimeric protomers. Five protomers subsequently associate to form pentamers which serve as building blocks for the capsid. Interacts with capsid protein VP2, capsid protein VP3 and capsid protein VP4 following cleavage of capsid protein VP0. Interacts with host CXADR. As to quaternary structure, interacts with capsid protein VP1 and capsid protein VP3 in the mature capsid. In terms of assembly, interacts with capsid protein VP0 and capsid protein VP1 to form heterotrimeric protomers. Five protomers subsequently associate to form pentamers which serve as building blocks for the capsid. Interacts with capsid protein VP4 in the mature capsid. Interacts with protein 2C; this interaction may be important for virion morphogenesis. Interacts with capsid protein VP1 and capsid protein VP3. As to quaternary structure, homodimer. In terms of assembly, homohexamer; forms a hexameric ring structure with 6-fold symmetry characteristic of AAA+ ATPases. Interacts (via N-terminus) with host RTN3 (via reticulon domain); this interaction is important for viral replication. Interacts with capsid protein VP3; this interaction may be important for virion morphogenesis. Interacts with protein 3CD. As to quaternary structure, homodimer. Interacts with host GBF1. Interacts (via GOLD domain) with host ACBD3 (via GOLD domain); this interaction allows the formation of a viral protein 3A/ACBD3 heterotetramer with a 2:2 stoichiometry, which will stimulate the recruitment of host PI4KB in order to synthesize PI4P at the viral RNA replication sites. In terms of assembly, interacts with RNA-directed RNA polymerase. Interacts with protein 3AB and with RNA-directed RNA polymerase. As to quaternary structure, interacts with Viral protein genome-linked and with protein 3CD. It depends on Mg(2+) as a cofactor. In terms of processing, specific enzymatic cleavages in vivo by the viral proteases yield processing intermediates and the mature proteins. Myristoylation is required for the formation of pentamers during virus assembly. Further assembly of 12 pentamers and a molecule of genomic RNA generates the provirion. Post-translationally, during virion maturation, immature virions are rendered infectious following cleavage of VP0 into VP4 and VP2. This maturation seems to be an autocatalytic event triggered by the presence of RNA in the capsid and it is followed by a conformational change infectious virion. In terms of processing, myristoylation is required during RNA encapsidation and formation of the mature virus particle. VPg is uridylylated by the polymerase into VPg-pUpU. This acts as a nucleotide-peptide primer for the genomic RNA replication.

It localises to the virion. The protein resides in the host cytoplasm. The protein localises to the host cytoplasmic vesicle membrane. Its subcellular location is the host nucleus. The catalysed reaction is a ribonucleoside 5'-triphosphate + H2O = a ribonucleoside 5'-diphosphate + phosphate + H(+). It carries out the reaction Selective cleavage of Tyr-|-Gly bond in the picornavirus polyprotein.. The enzyme catalyses RNA(n) + a ribonucleoside 5'-triphosphate = RNA(n+1) + diphosphate. It catalyses the reaction Selective cleavage of Gln-|-Gly bond in the poliovirus polyprotein. In other picornavirus reactions Glu may be substituted for Gln, and Ser or Thr for Gly.. With respect to regulation, replication or transcription is subject to high level of random mutations by the nucleotide analog ribavirin. Its function is as follows. Forms an icosahedral capsid of pseudo T=3 symmetry with capsid proteins VP2 and VP3. The capsid is 300 Angstroms in diameter, composed of 60 copies of each capsid protein and enclosing the viral positive strand RNA genome. Capsid protein VP1 mainly forms the vertices of the capsid. Capsid protein VP1 interacts with host CXADR to provide virion attachment to target host cells. This attachment induces virion internalization. Tyrosine kinases are probably involved in the entry process. After binding to its receptor, the capsid undergoes conformational changes. Capsid protein VP1 N-terminus (that contains an amphipathic alpha-helix) and capsid protein VP4 are externalized. Together, they shape a pore in the host membrane through which viral genome is translocated to host cell cytoplasm. Functionally, forms an icosahedral capsid of pseudo T=3 symmetry with capsid proteins VP2 and VP3. The capsid is 300 Angstroms in diameter, composed of 60 copies of each capsid protein and enclosing the viral positive strand RNA genome. Lies on the inner surface of the capsid shell. After binding to the host receptor, the capsid undergoes conformational changes. Capsid protein VP4 is released, Capsid protein VP1 N-terminus is externalized, and together, they shape a pore in the host membrane through which the viral genome is translocated into the host cell cytoplasm. In terms of biological role, component of immature procapsids, which is cleaved into capsid proteins VP4 and VP2 after maturation. Allows the capsid to remain inactive before the maturation step. Its function is as follows. Cysteine protease that cleaves viral polyprotein and specific host proteins. It is responsible for the autocatalytic cleavage between the P1 and P2 regions, which is the first cleavage occurring in the polyprotein. Also cleaves the host translation initiation factor EIF4G1, in order to shut down the capped cellular mRNA translation. Inhibits the host nucleus-cytoplasm protein and RNA trafficking by cleaving host members of the nuclear pores. Counteracts stress granule formation probably by antagonizing its assembly or promoting its dissassembly. Cleaves and inhibits host IFIH1/MDA5, thereby inhibiting the type-I IFN production and the establishment of the antiviral state. Cleaves and inhibits host MAVS, thereby inhibiting the type-I IFN production and the establishment of the antiviral state. Functionally, plays an essential role in the virus replication cycle by acting as a viroporin. Creates a pore in the host endoplasmic reticulum and as a consequence releases Ca2+ in the cytoplasm of infected cell. In turn, high levels of cytoplasmic calcium may trigger membrane trafficking and transport of viral ER-associated proteins to viroplasms, sites of viral genome replication. Induces and associates with structural rearrangements of intracellular membranes. Displays RNA-binding, nucleotide binding and NTPase activities. May play a role in virion morphogenesis and viral RNA encapsidation by interacting with the capsid protein VP3. In terms of biological role, localizes the viral replication complex to the surface of membranous vesicles. Together with protein 3CD binds the Cis-Active RNA Element (CRE) which is involved in RNA synthesis initiation. Acts as a cofactor to stimulate the activity of 3D polymerase, maybe through a nucleid acid chaperone activity. Its function is as follows. Localizes the viral replication complex to the surface of membranous vesicles. It inhibits host cell endoplasmic reticulum-to-Golgi apparatus transport and causes the disassembly of the Golgi complex, possibly through GBF1 interaction. This would result in depletion of MHC, trail receptors and IFN receptors at the host cell surface. Plays an essential role in viral RNA replication by recruiting ACBD3 and PI4KB at the viral replication sites, thereby allowing the formation of the rearranged membranous structures where viral replication takes place. Functionally, acts as a primer for viral RNA replication and remains covalently bound to viral genomic RNA. VPg is uridylylated prior to priming replication into VPg-pUpU. The oriI viral genomic sequence may act as a template for this. The VPg-pUpU is then used as primer on the genomic RNA poly(A) by the RNA-dependent RNA polymerase to replicate the viral genome. During genome replication, the VPg-RNA linkage is removed by the host TDP2, thereby accelerating replication. During the late stage of the replication cycle, host TDP2 is excluded from sites of viral RNA synthesis and encapsidation, allowing for the generation of progeny virions. Involved in the viral replication complex and viral polypeptide maturation. It exhibits protease activity with a specificity and catalytic efficiency that is different from protease 3C. Protein 3CD lacks polymerase activity. Protein 3CD binds to the 5'UTR of the viral genome. In terms of biological role, replicates the viral genomic RNA on the surface of intracellular membranes. May form linear arrays of subunits that propagate along a strong head-to-tail interaction called interface-I. Covalently attaches UMP to a tyrosine of VPg, which is used to prime RNA synthesis. The positive stranded RNA genome is first replicated at virus induced membranous vesicles, creating a dsRNA genomic replication form. This dsRNA is then used as template to synthesize positive stranded RNA genomes. ss(+)RNA genomes are either translated, replicated or encapsidated. Its function is as follows. Major viral protease that mediates proteolytic processing of the polyprotein. Cleaves host EIF5B, contributing to host translation shutoff. Also cleaves host PABPC1, contributing to host translation shutoff. Cleaves host NLRP1, triggers host N-glycine-mediated degradation of the autoinhibitory NLRP1 N-terminal fragment. This chain is Genome polyprotein, found in Coxsackievirus B6 (strain Schmitt).